A 370-amino-acid polypeptide reads, in one-letter code: 5-hydroxytryptamine receptor 5B (370 aa).

Positions 1-36 (MEVSNLSGATPGLAFPPGPESCSDSPSSGRSMGSTP) are disordered. Residues 1–48 (MEVSNLSGATPGLAFPPGPESCSDSPSSGRSMGSTPGGLILPGREPPF) lie on the Extracellular side of the membrane. Residue Asn5 is glycosylated (N-linked (GlcNAc...) asparagine). Low complexity predominate over residues 20-36 (ESCSDSPSSGRSMGSTP). The chain crosses the membrane as a helical span at residues 49–75 (SAFTVLVVTLLVLLIAATFLWNLLVLV). Over 76 to 88 (TILRVRAFHRVPH) the chain is Cytoplasmic. Residues 89–115 (NLVASTAVSDVLVAVLVMPLSLVSELS) form a helical membrane-spanning segment. The Extracellular segment spans residues 116 to 127 (AGRRWQLGRSLC). A disulfide bond links Cys127 and Cys205. The chain crosses the membrane as a helical span at residues 128 to 150 (HVWISFDVLCCTASIWNVAAIAL). Asp134 provides a ligand contact to serotonin. The Cytoplasmic portion of the chain corresponds to 151–168 (DRYWTITRHLQYTLRTRS). The chain crosses the membrane as a helical span at residues 169-189 (RASALMIAITWALSALIALAP). Residues 190–211 (LLFGWGEAYDARLQRCQVSQEP) are Extracellular-facing. The helical transmembrane segment at 212-233 (SYAVFSTCGAFYLPLAVVLFVY) threads the bilayer. At 234-300 (WKIYKAAKFR…QKEKRAAMMV (67 aa)) the chain is on the cytoplasmic side. A helical membrane pass occupies residues 301–325 (GILIGVFVLCWIPFFLTELISPLCA). The Extracellular portion of the chain corresponds to 326-327 (CS). Residues 328-352 (LPPIWKSIFLWLGYSNSFFNPLIYT) form a helical membrane-spanning segment. Residues 353-370 (AFNKNYNNAFKSLFTKQR) lie on the Cytoplasmic side of the membrane.

The protein belongs to the G-protein coupled receptor 1 family. Expressed predominantly in the central nervous system; in the hippocampus, habenula, and the doral raphe.

It localises to the cell membrane. G-protein coupled receptor for 5-hydroxytryptamine (serotonin), a biogenic hormone that functions as a neurotransmitter, a hormone and a mitogen. Also functions as a receptor for ergot alkaloid derivatives and other psychoactive substances. Ligand binding causes a conformation change that triggers signaling via guanine nucleotide-binding proteins (G proteins) and modulates the activity of downstream effectors. Htr5b is coupled to G(i)/G(o) G alpha proteins and mediates inhibitory neurotransmission: signaling inhibits adenylate cyclase activity and activates a phosphatidylinositol-calcium second messenger system that regulates the release of Ca(2+) ions from intracellular stores. This Mus musculus (Mouse) protein is 5-hydroxytryptamine receptor 5B.